Consider the following 480-residue polypeptide: Glycogen synthase (480 aa).

Residue K15 coordinates ADP-alpha-D-glucose.

Belongs to the glycosyltransferase 1 family. Bacterial/plant glycogen synthase subfamily.

The enzyme catalyses [(1-&gt;4)-alpha-D-glucosyl](n) + ADP-alpha-D-glucose = [(1-&gt;4)-alpha-D-glucosyl](n+1) + ADP + H(+). The protein operates within glycan biosynthesis; glycogen biosynthesis. Functionally, synthesizes alpha-1,4-glucan chains using ADP-glucose. The sequence is that of Glycogen synthase from Pasteurella multocida (strain Pm70).